A 431-amino-acid chain; its full sequence is Enolase (431 aa).

(2R)-2-phosphoglycerate is bound at residue glutamine 163. Catalysis depends on glutamate 205, which acts as the Proton donor. The Mg(2+) site is built by aspartate 242, glutamate 288, and aspartate 315. Residues lysine 340, arginine 369, serine 370, and lysine 391 each contribute to the (2R)-2-phosphoglycerate site. Lysine 340 (proton acceptor) is an active-site residue.

This sequence belongs to the enolase family. Requires Mg(2+) as cofactor.

It is found in the cytoplasm. It localises to the secreted. The protein localises to the cell surface. The enzyme catalyses (2R)-2-phosphoglycerate = phosphoenolpyruvate + H2O. Its pathway is carbohydrate degradation; glycolysis; pyruvate from D-glyceraldehyde 3-phosphate: step 4/5. Functionally, catalyzes the reversible conversion of 2-phosphoglycerate (2-PG) into phosphoenolpyruvate (PEP). It is essential for the degradation of carbohydrates via glycolysis. The chain is Enolase from Bacillus cereus (strain ZK / E33L).